The following is a 312-amino-acid chain: 2-aminophenol 1,6-dioxygenase subunit beta (312 aa).

Fe cation is bound by residues H13, H62, and E251.

Belongs to the LigB/MhpB extradiol dioxygenase family. In terms of assembly, the APD complex is a heterotetramer of 2 alpha (CnbCa) and 2 beta (CnbCb) subunits. The cofactor is Fe(2+).

It carries out the reaction 2-aminophenol + O2 = 2-aminomuconate 6-semialdehyde. It catalyses the reaction 2-amino-5-chlorophenol + O2 = 2-amino-5-chloromuconate 6-semialdehyde. Its pathway is xenobiotic degradation; nitrobenzene degradation. It participates in xenobiotic degradation; 4-chloronitrobenzene degradation. Complete loss of activity in the presence of Ni(2+), Co(2+), Cd(2+), Zn(2+) and hydrogen peroxide, however activity with hydrogen peroxide partially restored upon addition of excess ascorbate. Partially inhibited by Fe(2+), Mg(2+), Ca(2+), Mn(2+), Cu(2+) and also by EDTA, at 2 mM concentration. Total activity inhibited in the presence of catechol or 4-nitrocatechol but completely restored after removal of catechol and addition of 2 mM Fe(2+) and 5 mM ascorbate. In terms of biological role, component of the 2-aminophenol 1,6-dioxygenase (APD) complex that catalyzes the ring fission of 2-aminophenol to produce 2-aminomuconic semialdehyde. CnbCb seems to be the catalytic subunit of the complex. Also active on other substrates such as 2-amino-5-chlorophenol (68% activity), protocatechuate (33% activity) and catechol (5% activity). Both 2-aminophenol and 2-amino-5-cholorophenol are likely native substrates for this dioxygenase which is involved in the reductive degradation pathway of both nitrobenzene (NB) and 4-chloronitrobenzene (4-CNB), allowing C.testosteroni strain CNB-1 to grow on these compounds as sole source of carbon, nitrogen, and energy. The sequence is that of 2-aminophenol 1,6-dioxygenase subunit beta from Comamonas testosteroni (Pseudomonas testosteroni).